Reading from the N-terminus, the 217-residue chain is Trimethylamine corrinoid protein 2 (217 aa).

Residues 1–92 form the B12-binding N-terminal domain; that stretch reads MAGKEEIIAK…EMEKRKAKTT (92 aa). A B12-binding domain is found at 94–217; that stretch reads LGTVIIGTIE…VNKIKAAIKS (124 aa). Residue H107 participates in methylcob(III)alamin binding.

The protein belongs to the methylamine corrinoid protein family. Can form a complex with MttB.

The protein operates within one-carbon metabolism; methanogenesis from trimethylamine. In terms of biological role, acts probably as a methyl group carrier between MttB and either MtbA or MtaA. This Methanosarcina acetivorans (strain ATCC 35395 / DSM 2834 / JCM 12185 / C2A) protein is Trimethylamine corrinoid protein 2 (mttC2).